We begin with the raw amino-acid sequence, 257 residues long: Global transcriptional regulator CodY (257 aa).

A GAF domain region spans residues 1–155; sequence MSLLSKTREL…AATVIGMEIL (155 aa). The H-T-H motif DNA-binding region spans 203–222; sequence ASKVADGVGITRSVIVNALR.

The protein belongs to the CodY family.

Its subcellular location is the cytoplasm. Functionally, DNA-binding global transcriptional regulator which is involved in the adaptive response to starvation and acts by directly or indirectly controlling the expression of numerous genes in response to nutrient availability. During rapid exponential growth, CodY is highly active and represses genes whose products allow adaptation to nutrient depletion. The chain is Global transcriptional regulator CodY from Staphylococcus aureus (strain bovine RF122 / ET3-1).